We begin with the raw amino-acid sequence, 956 residues long: uncharacterized protein (956 aa).

Residues 918–942 adopt a coiled-coil conformation; sequence NSINEAIEKLNEAADAYQAIIDQQK.

This is an uncharacterized protein from Acanthamoeba polyphaga (Amoeba).